We begin with the raw amino-acid sequence, 612 residues long: MPDYRSKTSTFGRNMAGARALWRATGMKDEDFKKPIIAVANSFTQFVPGHVHLKDLGQLVAREIEKAGGVAKEFDTIAVDDGIAMGHDGMLYSLPSREIIADSVEYMVNAHCADALVCISNCDKITPGMLMASLRLNIPVVFVSGGPMEAGKTKLSQHGLDLVDAMVIAADSSASDEKVEAYERSACPTCGSCSGMFTANSMNCLTEALGLSLPGNGTIVATHADRRELFLQAGRTIVDLCRRYYQEGDESVLPRAIASRAAFENAMTLDIAMGGSTNTILHLLAAAQEAEVDFDLHAIDALSRQVPQLCKVAPNTPKYHIEDVHRAGGIVAILGELARAGLLNTEVATVHSKTLGEAIEKWDVRVNRDQAVHTFFKAGPAGIPSQEAFSQSERWDSLDLDRAEGCIRDLEHAFSTEGGLAVLYGNIALDGCVVKTAGVDESILVFEGTAKIFESQDAAVKGILGDEVKPGDVVVIRYEGPKGGPGMQEMLYPTSYLKSKGLGKQCALLTDGRFSGGTSGLSIGHASPEAAAGGAIGLVEDGDKILIDIPNRSINLLVSDEELKARRLHQDHKGWKPAAPRARKVSTALKAYALLATSADKGAVRNKALLDE.

Mg(2+) is bound at residue Asp-81. Cys-122 contacts [2Fe-2S] cluster. Residues Asp-123 and Lys-124 each contribute to the Mg(2+) site. Lys-124 bears the N6-carboxylysine mark. [2Fe-2S] cluster is bound at residue Cys-193. Glu-489 provides a ligand contact to Mg(2+). Residue Ser-515 is the Proton acceptor of the active site.

This sequence belongs to the IlvD/Edd family. As to quaternary structure, homodimer. [2Fe-2S] cluster serves as cofactor. Mg(2+) is required as a cofactor.

The enzyme catalyses (2R)-2,3-dihydroxy-3-methylbutanoate = 3-methyl-2-oxobutanoate + H2O. It carries out the reaction (2R,3R)-2,3-dihydroxy-3-methylpentanoate = (S)-3-methyl-2-oxopentanoate + H2O. The protein operates within amino-acid biosynthesis; L-isoleucine biosynthesis; L-isoleucine from 2-oxobutanoate: step 3/4. Its pathway is amino-acid biosynthesis; L-valine biosynthesis; L-valine from pyruvate: step 3/4. In terms of biological role, functions in the biosynthesis of branched-chain amino acids. Catalyzes the dehydration of (2R,3R)-2,3-dihydroxy-3-methylpentanoate (2,3-dihydroxy-3-methylvalerate) into 2-oxo-3-methylpentanoate (2-oxo-3-methylvalerate) and of (2R)-2,3-dihydroxy-3-methylbutanoate (2,3-dihydroxyisovalerate) into 2-oxo-3-methylbutanoate (2-oxoisovalerate), the penultimate precursor to L-isoleucine and L-valine, respectively. This Azotobacter vinelandii (strain DJ / ATCC BAA-1303) protein is Dihydroxy-acid dehydratase.